The following is a 273-amino-acid chain: Glucosamine-6-phosphate deaminase (273 aa).

The active-site Proton acceptor; for enolization step is the D72. The active-site For ring-opening step is the D141. The active-site Proton acceptor; for ring-opening step is H143. E148 (for ring-opening step) is an active-site residue.

This sequence belongs to the glucosamine/galactosamine-6-phosphate isomerase family. As to quaternary structure, homohexamer.

It is found in the cytoplasm. The catalysed reaction is alpha-D-glucosamine 6-phosphate + H2O = beta-D-fructose 6-phosphate + NH4(+). It functions in the pathway nucleotide-sugar biosynthesis; UDP-N-acetyl-alpha-D-glucosamine biosynthesis; alpha-D-glucosamine 6-phosphate from D-fructose 6-phosphate: step 1/1. Catalyzes the reversible conversion of alpha-D-glucosamine 6-phosphate (GlcN-6P) into beta-D-fructose 6-phosphate (Fru-6P) and ammonium ion, a regulatory reaction step in de novo uridine diphosphate-N-acetyl-alpha-D-glucosamine (UDP-GlcNAc) biosynthesis via hexosamine pathway. In Drosophila melanogaster (Fruit fly), this protein is Glucosamine-6-phosphate deaminase.